The sequence spans 378 residues: UDP-4-amino-4-deoxy-L-arabinose--oxoglutarate aminotransferase (378 aa).

An N6-(pyridoxal phosphate)lysine modification is found at lysine 182.

Belongs to the DegT/DnrJ/EryC1 family. ArnB subfamily. As to quaternary structure, homodimer. The cofactor is pyridoxal 5'-phosphate.

It catalyses the reaction UDP-4-amino-4-deoxy-beta-L-arabinose + 2-oxoglutarate = UDP-beta-L-threo-pentopyranos-4-ulose + L-glutamate. It functions in the pathway nucleotide-sugar biosynthesis; UDP-4-deoxy-4-formamido-beta-L-arabinose biosynthesis; UDP-4-deoxy-4-formamido-beta-L-arabinose from UDP-alpha-D-glucuronate: step 2/3. Its pathway is bacterial outer membrane biogenesis; lipopolysaccharide biosynthesis. In terms of biological role, catalyzes the conversion of UDP-4-keto-arabinose (UDP-Ara4O) to UDP-4-amino-4-deoxy-L-arabinose (UDP-L-Ara4N). The modified arabinose is attached to lipid A and is required for resistance to polymyxin and cationic antimicrobial peptides. In Aeromonas hydrophila subsp. hydrophila (strain ATCC 7966 / DSM 30187 / BCRC 13018 / CCUG 14551 / JCM 1027 / KCTC 2358 / NCIMB 9240 / NCTC 8049), this protein is UDP-4-amino-4-deoxy-L-arabinose--oxoglutarate aminotransferase.